The following is a 427-amino-acid chain: Enolase (427 aa).

Gln164 provides a ligand contact to (2R)-2-phosphoglycerate. Glu206 (proton donor) is an active-site residue. Mg(2+)-binding residues include Asp243, Glu284, and Asp311. (2R)-2-phosphoglycerate-binding residues include Lys336, Arg365, Ser366, and Lys387. Residue Lys336 is the Proton acceptor of the active site.

It belongs to the enolase family. Requires Mg(2+) as cofactor.

It is found in the cytoplasm. It localises to the secreted. The protein resides in the cell surface. The enzyme catalyses (2R)-2-phosphoglycerate = phosphoenolpyruvate + H2O. It functions in the pathway carbohydrate degradation; glycolysis; pyruvate from D-glyceraldehyde 3-phosphate: step 4/5. Its function is as follows. Catalyzes the reversible conversion of 2-phosphoglycerate (2-PG) into phosphoenolpyruvate (PEP). It is essential for the degradation of carbohydrates via glycolysis. The protein is Enolase of Synechococcus sp. (strain JA-2-3B'a(2-13)) (Cyanobacteria bacterium Yellowstone B-Prime).